A 397-amino-acid polypeptide reads, in one-letter code: tRNA-specific 2-thiouridylase MnmA (397 aa).

Residues 19-26 and L45 contribute to the ATP site; that span reads AMSGGVDS. Catalysis depends on C113, which acts as the Nucleophile. A disulfide bridge connects residues C113 and C210. Residue G137 participates in ATP binding. The segment at 160–162 is interaction with tRNA; it reads RDQ. The Cysteine persulfide intermediate role is filled by C210.

It belongs to the MnmA/TRMU family.

Its subcellular location is the cytoplasm. The enzyme catalyses S-sulfanyl-L-cysteinyl-[protein] + uridine(34) in tRNA + AH2 + ATP = 2-thiouridine(34) in tRNA + L-cysteinyl-[protein] + A + AMP + diphosphate + H(+). Its function is as follows. Catalyzes the 2-thiolation of uridine at the wobble position (U34) of tRNA, leading to the formation of s(2)U34. This Rhodopseudomonas palustris (strain ATCC BAA-98 / CGA009) protein is tRNA-specific 2-thiouridylase MnmA.